The following is a 283-amino-acid chain: 5'-nucleotidase SurE 2 (283 aa).

A divalent metal cation-binding residues include Asp-19, Asp-20, Ser-52, and Asn-110.

It belongs to the SurE nucleotidase family. A divalent metal cation is required as a cofactor.

It is found in the cytoplasm. It carries out the reaction a ribonucleoside 5'-phosphate + H2O = a ribonucleoside + phosphate. Functionally, nucleotidase that shows phosphatase activity on nucleoside 5'-monophosphates. This Chlamydia caviae (strain ATCC VR-813 / DSM 19441 / 03DC25 / GPIC) (Chlamydophila caviae) protein is 5'-nucleotidase SurE 2.